A 483-amino-acid polypeptide reads, in one-letter code: Transmembrane protein 39B (483 aa).

N-linked (GlcNAc...) asparagine glycosylation is present at Asn-9. 7 helical membrane-spanning segments follow: residues 76–96 (HLLFELQLFFCHLIALFVHYI), 114–134 (TSLNFHLIDFNVLTLTTIVLA), 158–182 (LLVATRFAVLTGTGWSLCRSIILLF), 187–207 (FFNLLFLCYPFGMYIPFLQLG), 281–301 (EVLLSSMLSAYYVAFVPVWFV), 414–434 (VLNILTTLEGVLIFYQLYSLL), and 440–460 (HHTISLALILFSNYYAFFKLL).

Belongs to the TMEM39 family.

The protein resides in the endoplasmic reticulum membrane. In terms of biological role, may protect the cells against DNA damage caused by exposure to the cold-warming stress and facilitates tissue damage repair during the recovery phase. The chain is Transmembrane protein 39B from Xenopus tropicalis (Western clawed frog).